The primary structure comprises 641 residues: Probable potassium transport system protein Kup 4 (641 aa).

The next 12 membrane-spanning stretches (helical) occupy residues 31–51 (AALG…LYTL), 64–84 (TASA…TISI), 119–139 (ILAV…VITP), 155–175 (GSLK…FFAA), 183–203 (IGAA…VLGL), 221–241 (AIGF…GVFL), 265–285 (WYAI…ALLI), 298–318 (LCPT…TIIA), 355–375 (IYVP…TIAF), 381–401 (LAGA…CLLF), 412–432 (LAVS…FFGA), and 437–457 (IAEG…LMLT).

The protein belongs to the HAK/KUP transporter (TC 2.A.72) family.

The protein localises to the cell inner membrane. The catalysed reaction is K(+)(in) + H(+)(in) = K(+)(out) + H(+)(out). Its function is as follows. Transport of potassium into the cell. Likely operates as a K(+):H(+) symporter. This Bradyrhizobium sp. (strain BTAi1 / ATCC BAA-1182) protein is Probable potassium transport system protein Kup 4.